A 533-amino-acid polypeptide reads, in one-letter code: Flavin-dependent halogenase armH4 (533 aa).

FAD is bound by residues glycine 16, alanine 19, and glutamate 49. Residues serine 337 and glycine 338 each coordinate chloride. FAD is bound at residue valine 339.

It belongs to the flavin-dependent halogenase family.

It carries out the reaction melleolide F + FADH2 + chloride + O2 = 6'-chloromelleolide F + FAD + 2 H2O + H(+). The enzyme catalyses melleolide F + bromide + FADH2 + O2 = 6'-bromomelleolide F + FAD + 2 H2O. Functionally, flavin-dependent halogenase involved in the biosynthesis of melleolides, a range of antifungal and phytotoxic polyketide derivatives composed of an orsellinic acid (OA) moiety esterified to various sesquiterpene alcohols. The halogenase catalyzes the transfer of a single chlorine atom to the melleolide backbone, resulting in a 6'-chloromelleolide product. The enzyme acts on free substrate and does not depend on carrier-protein-dependent acceptor molecules. Can also catalyze the transfer of a single bromine atom to the melleolide backbone in vitro. In Armillaria mellea (Honey mushroom), this protein is Flavin-dependent halogenase armH4.